Here is a 395-residue protein sequence, read N- to C-terminus: Chalcone synthase (395 aa).

V2 carries the N-acetylvaline modification. C169 is an active-site residue.

It belongs to the thiolase-like superfamily. Chalcone/stilbene synthases family.

It catalyses the reaction (E)-4-coumaroyl-CoA + 3 malonyl-CoA + 3 H(+) = 2',4,4',6'-tetrahydroxychalcone + 3 CO2 + 4 CoA. The protein operates within secondary metabolite biosynthesis; flavonoid biosynthesis. In terms of biological role, the primary product of this enzyme is 4,2',4',6'-tetrahydroxychalcone (also termed naringenin-chalcone or chalcone) which can under specific conditions spontaneously isomerize into naringenin. The protein is Chalcone synthase (CHS) of Cardamine amara (Large bitter-cress).